A 147-amino-acid polypeptide reads, in one-letter code: Hemoglobin subunit beta-1 (147 aa).

One can recognise a Globin domain in the interval 3-147; the sequence is KWSKTELTII…VVSALGKQYH (145 aa). Heme b-binding residues include His-64 and His-93.

It belongs to the globin family. As to quaternary structure, hb1 is a heterotetramer of two alpha chains and two beta-1 chains. Red blood cells.

Its function is as follows. Involved in oxygen transport from gills to the various peripheral tissues. This Cygnodraco mawsoni (Antarctic dragonfish) protein is Hemoglobin subunit beta-1 (hbb1).